The chain runs to 239 residues: tRNA (guanine-N(7)-)-methyltransferase (239 aa).

Glu69, Glu94, Asp121, and Asp144 together coordinate S-adenosyl-L-methionine. The active site involves Asp144. Lys148 lines the substrate pocket. Residues 150-155 form an interaction with RNA region; it reads RHNKRR. Substrate is bound by residues Asp180 and 217-220; that span reads TKFE.

The protein belongs to the class I-like SAM-binding methyltransferase superfamily. TrmB family. Monomer.

The catalysed reaction is guanosine(46) in tRNA + S-adenosyl-L-methionine = N(7)-methylguanosine(46) in tRNA + S-adenosyl-L-homocysteine. Its pathway is tRNA modification; N(7)-methylguanine-tRNA biosynthesis. Catalyzes the formation of N(7)-methylguanine at position 46 (m7G46) in tRNA. The protein is tRNA (guanine-N(7)-)-methyltransferase of Shigella dysenteriae serotype 1 (strain Sd197).